A 261-amino-acid polypeptide reads, in one-letter code: Cytochrome c oxidase subunit 3 (261 aa).

At 1–15 the chain is on the mitochondrial matrix side; sequence MAHQAHAYHMVDPSP. Residues 16–34 traverse the membrane as a helical segment; sequence WPLTGAIAALLLTSGTAVW. Residues 35-40 are Mitochondrial intermembrane-facing; it reads FHFHSL. The helical transmembrane segment at 41 to 66 threads the bilayer; sequence TLLTMGNILLLLTMYQWWRDIIREGT. The Mitochondrial matrix portion of the chain corresponds to 67-72; the sequence is FQGHHT. The chain crosses the membrane as a helical span at residues 73-105; it reads PPVQKGLRYGMILFITSEVFFFLGFFWAFYHSS. The Mitochondrial intermembrane portion of the chain corresponds to 106–128; sequence LSPTPELGGCWPPTGIITLDPFE. Residues 129-152 form a helical membrane-spanning segment; that stretch reads VPLLNTAVLLASGVTVTWAHHSIM. The Mitochondrial matrix portion of the chain corresponds to 153 to 155; it reads EGE. A helical membrane pass occupies residues 156 to 183; that stretch reads RKQTIQALTLTILLGFYFTFLQGMEYYE. The Mitochondrial intermembrane segment spans residues 184-190; it reads APFTIAD. The helical transmembrane segment at 191–223 threads the bilayer; sequence GVYGSTFFVATGFHGLHVIIGSTFLAICLLRQI. Residues 224 to 232 lie on the Mitochondrial matrix side of the membrane; the sequence is QYHFTSEHH. The chain crosses the membrane as a helical span at residues 233–256; sequence FGFEAAAWYWHFVDVVWLFLYVSI. Residues 257–261 are Mitochondrial intermembrane-facing; that stretch reads YWWGS.

It belongs to the cytochrome c oxidase subunit 3 family. As to quaternary structure, component of the cytochrome c oxidase (complex IV, CIV), a multisubunit enzyme composed of 14 subunits. The complex is composed of a catalytic core of 3 subunits MT-CO1, MT-CO2 and MT-CO3, encoded in the mitochondrial DNA, and 11 supernumerary subunits COX4I, COX5A, COX5B, COX6A, COX6B, COX6C, COX7A, COX7B, COX7C, COX8 and NDUFA4, which are encoded in the nuclear genome. The complex exists as a monomer or a dimer and forms supercomplexes (SCs) in the inner mitochondrial membrane with NADH-ubiquinone oxidoreductase (complex I, CI) and ubiquinol-cytochrome c oxidoreductase (cytochrome b-c1 complex, complex III, CIII), resulting in different assemblies (supercomplex SCI(1)III(2)IV(1) and megacomplex MCI(2)III(2)IV(2)).

It is found in the mitochondrion inner membrane. It carries out the reaction 4 Fe(II)-[cytochrome c] + O2 + 8 H(+)(in) = 4 Fe(III)-[cytochrome c] + 2 H2O + 4 H(+)(out). Functionally, component of the cytochrome c oxidase, the last enzyme in the mitochondrial electron transport chain which drives oxidative phosphorylation. The respiratory chain contains 3 multisubunit complexes succinate dehydrogenase (complex II, CII), ubiquinol-cytochrome c oxidoreductase (cytochrome b-c1 complex, complex III, CIII) and cytochrome c oxidase (complex IV, CIV), that cooperate to transfer electrons derived from NADH and succinate to molecular oxygen, creating an electrochemical gradient over the inner membrane that drives transmembrane transport and the ATP synthase. Cytochrome c oxidase is the component of the respiratory chain that catalyzes the reduction of oxygen to water. Electrons originating from reduced cytochrome c in the intermembrane space (IMS) are transferred via the dinuclear copper A center (CU(A)) of subunit 2 and heme A of subunit 1 to the active site in subunit 1, a binuclear center (BNC) formed by heme A3 and copper B (CU(B)). The BNC reduces molecular oxygen to 2 water molecules using 4 electrons from cytochrome c in the IMS and 4 protons from the mitochondrial matrix. This Salmo salar (Atlantic salmon) protein is Cytochrome c oxidase subunit 3 (mt-co3).